The chain runs to 521 residues: Lipid-translocating exporter-like protein RTA1 (521 aa).

7 consecutive transmembrane segments (helical) span residues 186 to 206, 211 to 231, 249 to 269, 292 to 312, 332 to 352, 371 to 391, and 418 to 438; these read GAPIFFTIAFAISTILHSWQC, AWKLIWLQPACAALFTLGYAL, LALFILSQICIYLGPPLLELA, VTAFFGGLMAIVEGLSGSGVS, LVALALQVCVIFIFVYLSVLF, TLMTLYLSMALIFIRCVFRLV, and EAYFYAFEASLMLINSFLWNV. The tract at residues 493 to 521 is disordered; the sequence is THSQPQELYENPNGNGHKKFRLGNGGRAT.

The protein belongs to the lipid-translocating exporter (LTE) (TC 9.A.26.1) family.

It is found in the membrane. Lipid-translocating exporter-like protein; part of the gene cluster that mediates the biosynthesis of phomenoic acid, a long chain aliphatic carboxylic acid that does not appear to be essential for pathogenicity but may play a role in allowing to outcompete other fungi in the environmental niche via its antifungal properties. The polypeptide is Lipid-translocating exporter-like protein RTA1 (Leptosphaeria maculans (strain JN3 / isolate v23.1.3 / race Av1-4-5-6-7-8) (Blackleg fungus)).